A 299-amino-acid polypeptide reads, in one-letter code: Very long chain fatty acid elongase 5 (299 aa).

The residue at position 1 (Met-1) is an N-acetylmethionine. The next 7 helical transmembrane spans lie at 26–46, 64–84, 112–132, 139–158, 168–187, 205–225, and 227–247; these read WFLL…LLIV, ILVV…YELV, VLWW…FFIL, ITVL…WFVM, FGAT…YGLS, GQLV…IWPC, and FPLG…ALFT.

The protein belongs to the ELO family. ELOVL5 subfamily. In terms of assembly, interacts with TECR. Highly expressed in lung and brain.

Its subcellular location is the endoplasmic reticulum membrane. It localises to the cell projection. The protein localises to the dendrite. It carries out the reaction a very-long-chain acyl-CoA + malonyl-CoA + H(+) = a very-long-chain 3-oxoacyl-CoA + CO2 + CoA. It catalyses the reaction (6Z,9Z,12Z,15Z)-octadecatetraenoyl-CoA + malonyl-CoA + H(+) = (8Z,11Z,14Z,17Z)-3-oxoicosatetraenoyl-CoA + CO2 + CoA. The catalysed reaction is (6Z,9Z,12Z)-octadecatrienoyl-CoA + malonyl-CoA + H(+) = (8Z,11Z,14Z)-3-oxoeicosatrienoyl-CoA + CO2 + CoA. The enzyme catalyses (5Z,8Z,11Z,14Z,17Z)-eicosapentaenoyl-CoA + malonyl-CoA + H(+) = 3-oxo-(7Z,10Z,13Z,16Z,19Z)-docosapentaenoyl-CoA + CO2 + CoA. It carries out the reaction (5Z,8Z,11Z,14Z)-eicosatetraenoyl-CoA + malonyl-CoA + H(+) = (7Z,10Z,13Z,16Z)-3-oxodocosatetraenoyl-CoA + CO2 + CoA. It catalyses the reaction (9Z,12Z,15Z)-octadecatrienoyl-CoA + malonyl-CoA + H(+) = (11Z,14Z,17Z)-3-oxoeicosatrienoyl-CoA + CO2 + CoA. The catalysed reaction is (9Z)-hexadecenoyl-CoA + malonyl-CoA + H(+) = 3-oxo-(11Z)-octadecenoyl-CoA + CO2 + CoA. The enzyme catalyses (9Z)-octadecenoyl-CoA + malonyl-CoA + H(+) = 3-oxo-(11Z)-eicosenoyl-CoA + CO2 + CoA. It carries out the reaction (11Z)-octadecenoyl-CoA + malonyl-CoA + H(+) = 3-oxo-(13Z)-eicosenoyl-CoA + CO2 + CoA. It catalyses the reaction (9Z,12Z)-octadecadienoyl-CoA + malonyl-CoA + H(+) = (11Z,14Z)-3-oxoicosa-11,14-dienoyl-CoA + CO2 + CoA. It participates in lipid metabolism; polyunsaturated fatty acid biosynthesis. Functionally, catalyzes the first and rate-limiting reaction of the four reactions that constitute the long-chain fatty acids elongation cycle. This endoplasmic reticulum-bound enzymatic process allows the addition of 2 carbons to the chain of long- and very long-chain fatty acids (VLCFAs) per cycle. Condensing enzyme that acts specifically toward polyunsaturated acyl-CoA with the higher activity toward C18:3(n-6) acyl-CoA. May participate in the production of monounsaturated and of polyunsaturated VLCFAs of different chain lengths that are involved in multiple biological processes as precursors of membrane lipids and lipid mediators. In conditions where the essential linoleic and alpha linoleic fatty acids are lacking it is also involved in the synthesis of Mead acid from oleic acid. The protein is Very long chain fatty acid elongase 5 of Rattus norvegicus (Rat).